The chain runs to 2359 residues: MTITTMTPQNGTRRQVDGGPICFFPTMTRLDMQSITFDNHVVQKLTSFPNASDAGVHLLLAGLWALTLRQYAEVDTARFEVSTSILASGKGSGATKHVFSIALSPSDPVSTLFDVRNWDIRFVDQKHSDSFNTGVFVVENQNGRCLLDVEYHDINLLLQSNRTSAELSLVYRSSAIAGTYARHLADGIAQAIISISENPNQSIGAVDFCCSLQKAQVVTWQNAKIIQPDRSFLFEYISRNATVHGDTLAIDSWDGQFTYAELDGLSTVMATRFQERGIGPGDLVPMCFGKTRWAIAAMLAINKTGAGFVPLDPAYPQSRLETIIQKTQARVALASPTTESILRPLGLPLLVISDSILGCCLPHSKRYTAPNSGVAPAYCFFTSGSTGDPKGCEVSHLAFASIATHARSLCLSQQSRSLQFASFCFGASLLEIWCTLIVGGTLCIPSDHDRLNSLGEFMAKMRINWAFITPTVLASISPDNFNNLHLFIAGEPIGERDIRTWAPRARLFQAYGLTEWAGVFAVSRQIRTPEDRKSIGSPVNARAWIVDPLDHQKLAPIGAVGELVIEGPSLAQGYRGDPQRTAAVFLQRPPWLTLPALSKDGSSSRVYKTGDLVRYAEDGSLVYVRRKDNQVKIHGQRLEIGEVEYHVRQLFPQAKMVIVMVHEPSDAASHQRNLVALTLHPPNNGHTGFSHGKLEFMEVDQEYQSKVEHVRNGLRSRLPAFMIPQLFLPLSQIPTTITGKADRRSLCRDVNKLSYAQLHGLTTQMVSTRAAQGKGEEAIHAAVCDVLGLAPEHLGMNDNFFHLGGNSASAMKLTMSARRRGLRFTIRDVFNHPVLAELASAANLSNGCERPVVQTMELLEPESVSELKQLAVSQCRIDEDIIEDIYPSTALQEGLVAITARDPSLCKARVICKLRSNVRIDALKAAWECVVQLNDILRTRFILSASHGTFQVVCKEPFSWARAQNLEDCIQQSDALVHRVGDDLVHAYIIPDEKDRDSASTFVFVAHHALCDQWSIRLLLDQLTAAYGHSKLPSNRFSAFIRYLTKTRSHFKNYWINQFQGLEAVAFPPLPSPSYTPVASEKFDFVMKLLGNTTKQITTATYIKLAWAVVISCNTGSNDTVFGVTVNGRGAPIDGVGELTGPTIATIPQRIKLLPDQSATSALAEIQSHSLEVIPYEQAGLQNIQKYSPEARSACMFQSQLIIQPCPPSPPDLFEACDFSATQTGGFSAYGLSLECQMTYDDRHCEVTATFDPGMISRERVQRLLQHLELVLQDVMADPSRKVGDLPRMSRQDWDQIQRWSGTLPPVSRQCVHDAVDERYLEYPNACAVSAPDGDLSYAELIHSANAVAAELLAHGVEPGKYIPVLFEKCKWSPVAMLGVLKAGAAFVLLDPSYPPQRLHAICGGLKSQIILCSKGLSARAASLGPTAIAVHENATFLVDIPNATLPVVSPEDPAYVVFTSGSTGTPKGAIIDHQSYCSSALAHNRAHFLGRNSRVLQYASYAFDVSIMETLSTLMAGGCVCILSDLERHDHFADSVQRLAVTHAFLTPSTARLLMQRELPSLCVLVMGGEVMSLADRSYWMKRVRLMNEYGIAECSVASTIREVSDVEQRDIGFPMGVLAWVVDQNDHEKLVAIGAIGELLLEGPSVGRGYLDNPEATRRAFIEQPGWLRAVRGGKTSRVYKTGDLVQYNEDGSLSFIGRKDSQIKIRGQRFELEEVEQHLRRIDEIKEVTAVAVAPSDRQKQAYLVAFIVPRTRESFCVHSAKALVTHPTEEFRHLAAAIQSKLHSILPAHMVPSIYLPVNQMPKTSSDKVDRCRLKEEVGKWSWSDLQAYSVSSTSRRAPSNSVEQDLQRVWAQILGIRLDSIGVEDSFFHLGGDSIIAMQVVAEARSRGLDHSVQDINQLKSIKAIANKIGVVSTIAQPVVQDQVTDELFGLTPIQEFFFEKYPEGTCRFNQNILVHFQKPVADIDVERAANKLVQNHAILRARYARQKDGSWKQFFTGYTEQCFRFSMHKVNSVQEMRHIIGQSQTSLDPEHGPVFTVDLFDHNGQQSLFMIGHHLVLDLVSWRIILADMEAMILDPQHQPHLTMSFQTWARLQAEYGTRHLEPPPVQQLCSIDEPSMRKFWGAENNANTGGDSKTRLIRVNEQLTNKLFGPSSQALDVEPVELLHAAILFSFVNTFPQRPAPCIFGEAHGRETWDSSIDVTRTIGWFTTLWPVVAQVNPSDSLETVVRTVRQARRAMDMHGWKHFTSIYHNTQQTKCSAGTHLMEITFNYAGKFQQVEQDGALFRMEPMAKQNLFDGAAELGRWAMLEINSVILNGMLEFHVTYNRGTDEASVLTPWMDNLVKCLEDLASGFA.

The interval 239–633 is adenylation 1; the sequence is RNATVHGDTL…VRRKDNQVKI (395 aa). Residues 770–846 enclose the Carrier 1 domain; it reads AAQGKGEEAI…ELASAANLSN (77 aa). Position 807 is an O-(pantetheine 4'-phosphoryl)serine (S807). A condensation 1 region spans residues 883–1292; the sequence is EDIYPSTALQ…VGDLPRMSRQ (410 aa). An adenylation 2 region spans residues 1321-1709; that stretch reads LEYPNACAVS…GRKDSQIKIR (389 aa). In terms of domain architecture, Carrier 2 spans 1842–1918; the sequence is APSNSVEQDL…AIANKIGVVS (77 aa). O-(pantetheine 4'-phosphoryl)serine is present on S1879. The interval 1936 to 2356 is condensation 2; that stretch reads LTPIQEFFFE…LVKCLEDLAS (421 aa).

It belongs to the NRP synthetase family.

The enzyme catalyses anthranilate + L-tryptophan + 2 ATP = (R)-benzodiazepinedione + 2 AMP + 2 diphosphate + H(+). It functions in the pathway alkaloid biosynthesis. Its function is as follows. Nonribosomal peptide synthetase; part of the gene cluster that mediates the biosynthesis of the prenylated pyrroloindoline diketopiperazine acetylaszonalenin. The first step in the pathway is the formation of (R)-benzodiazepinedione by condensation of tryptophan and anthranilic acid catalyzed by the non-ribosomal peptide synthetase anaPS. The prenyltransferase anaPT then converts (R)-benzodiazepinedione to aszonalenin in the presence of dimethylallyl diphosphate (DMAPP) via C3-prenylation. The last step in the biosynthesis of acetylaszonalenin via acetylation of aszonalenin at position N1 catalyzed by anaAT. The protein is Nonribosomal peptide synthetase anaPS of Neosartorya fischeri (strain ATCC 1020 / DSM 3700 / CBS 544.65 / FGSC A1164 / JCM 1740 / NRRL 181 / WB 181) (Aspergillus fischerianus).